The sequence spans 90 residues: DNA-binding protein HU (90 aa).

This sequence belongs to the bacterial histone-like protein family. Homodimer.

Functionally, histone-like DNA-binding protein which is capable of wrapping DNA to stabilize it, and thus to prevent its denaturation under extreme environmental conditions. The chain is DNA-binding protein HU (hup) from Pasteurella multocida (strain Pm70).